The primary structure comprises 276 residues: Ribosomal RNA small subunit methyltransferase A (276 aa).

6 residues coordinate S-adenosyl-L-methionine: asparagine 19, leucine 21, glycine 46, glutamate 71, aspartate 94, and asparagine 117.

Belongs to the class I-like SAM-binding methyltransferase superfamily. rRNA adenine N(6)-methyltransferase family. RsmA subfamily.

Its subcellular location is the cytoplasm. It carries out the reaction adenosine(1518)/adenosine(1519) in 16S rRNA + 4 S-adenosyl-L-methionine = N(6)-dimethyladenosine(1518)/N(6)-dimethyladenosine(1519) in 16S rRNA + 4 S-adenosyl-L-homocysteine + 4 H(+). Its function is as follows. Specifically dimethylates two adjacent adenosines (A1518 and A1519) in the loop of a conserved hairpin near the 3'-end of 16S rRNA in the 30S particle. May play a critical role in biogenesis of 30S subunits. This chain is Ribosomal RNA small subunit methyltransferase A, found in Burkholderia ambifaria (strain ATCC BAA-244 / DSM 16087 / CCUG 44356 / LMG 19182 / AMMD) (Burkholderia cepacia (strain AMMD)).